The sequence spans 244 residues: DNA polymerase sliding clamp (244 aa).

The protein belongs to the PCNA family. As to quaternary structure, homotrimer. The subunits circularize to form a toroid; DNA passes through its center. Replication factor C (RFC) is required to load the toroid on the DNA.

Its function is as follows. Sliding clamp subunit that acts as a moving platform for DNA processing. Responsible for tethering the catalytic subunit of DNA polymerase and other proteins to DNA during high-speed replication. The polypeptide is DNA polymerase sliding clamp (Methanothrix thermoacetophila (strain DSM 6194 / JCM 14653 / NBRC 101360 / PT) (Methanosaeta thermophila)).